The sequence spans 1478 residues: ATP-binding cassette transporter abc2 (1478 aa).

The Vacuolar portion of the chain corresponds to 1–25; sequence MVLEQDLDPFVGGNWMNSAYKGFTF. The helical transmembrane segment at 26–46 threads the bilayer; the sequence is LSATWLAPNIYLLISGCLQYF. The Cytoplasmic segment spans residues 47-65; that stretch reads YEVRKRSHYFHFRRFWTIW. Residues 66-85 traverse the membrane as a helical segment; it reads LKSLVIMVLLFTHIYDCYKT. N86 carries N-linked (GlcNAc...) asparagine glycosylation. At 86 to 90 the chain is on the vacuolar side; that stretch reads NESVW. A helical membrane pass occupies residues 91–104; the sequence is NVLSIITYFLALFL. Topologically, residues 105-116 are cytoplasmic; that stretch reads HVVEQPTLRIPM. Residues 117–137 form a helical membrane-spanning segment; it reads ASLLMFWLFKFLASALVLLLR. Over 138–154 the chain is Vacuolar; the sequence is PNYTMFPMLNVVPSITF. N139 is a glycosylation site (N-linked (GlcNAc...) asparagine). The chain crosses the membrane as a helical span at residues 155–175; that stretch reads FCSLVCLLAEIYVPPANRVWY. Topologically, residues 176–259 are cytoplasmic; sequence PDDAAELEET…KKSSLYMWGV (84 aa). Residues 260-280 traverse the membrane as a helical segment; the sequence is LFLNHWKLTVVIIVLKLVQDV. The ABC transmembrane type-1 1 domain maps to 268–557; sequence TVVIIVLKLV…LPIVVSSVLE (290 aa). The Vacuolar portion of the chain corresponds to 281 to 310; it reads VAFIQPNLIRKIVIFVSSYSSEHPQPPQVG. The chain crosses the membrane as a helical span at residues 311–331; it reads FSLAIAMFLTNVVQTALLQQY. At 332–387 the chain is on the cytoplasmic side; sequence FQLGMVLGMRWRSELITAIYRKSLRLSSAARQSRSVGDIVNYMSVDTQKVCDLTMF. Residues 388-408 traverse the membrane as a helical segment; it reads LFVIVSGPFQIVLALTNLYHL. At 409–411 the chain is on the vacuolar side; that stretch reads VGY. The chain crosses the membrane as a helical span at residues 412-432; sequence GALSGAFVTFLLFPCNVVIAS. Residues 433–495 are Cytoplasmic-facing; sequence IFKRFQNRQM…MLKKIGIVNT (63 aa). Residues 496–516 form a helical membrane-spanning segment; it reads IGNFTWLFAPILVSAATFGTF. Over 517-539 the chain is Vacuolar; that stretch reads IVLYGKTRVLSVDIVFACLSLFN. The chain crosses the membrane as a helical span at residues 540–560; the sequence is LLQFPLTMLPIVVSSVLEASV. The Cytoplasmic portion of the chain corresponds to 561 to 910; that stretch reads AISRIYGFLT…VKWKVYWTYF (350 aa). In terms of domain architecture, ABC transporter 1 spans 593–821; that stretch reads LEIKKGTFSW…PDSQLFQLLS (229 aa). Residue 631–638 participates in ATP binding; it reads GKVGMGKS. Residues 828–867 form a disordered region; that stretch reads TASSTGADTPLSRSQSVITSSTDVTSSASRSSDTVSNYPK. Residues 829–840 are compositionally biased toward polar residues; the sequence is ASSTGADTPLSR. A phosphoserine mark is found at S839, S843, and S863. The segment covering 841 to 863 has biased composition (low complexity); it reads SQSVITSSTDVTSSASRSSDTVS. The helical transmembrane segment at 911-931 threads the bilayer; sequence KACSLFLIFLYFLFIIGGIGM. An ABC transmembrane type-1 2 domain is found at 918 to 1202; that stretch reads IFLYFLFIIG…VVRQSVDVET (285 aa). Over 932–968 the chain is Vacuolar; that stretch reads NVGTNVWLKHWSEVNTQLGYNPKPYFYLGIYTLFGLL. A helical transmembrane segment spans residues 969-990; the sequence is SCALISLSSLTITVFCAIKSCR. Over 991–1033 the chain is Cytoplasmic; sequence YLHDSMVKAVLRAPMSFFETTPTGRILNRFSSDVYRVDEVISR. The chain crosses the membrane as a helical span at residues 1034-1054; that stretch reads VFMFFFRNLFQIVFVLAVICY. Position 1055 (S1055) is a topological domain, vacuolar. The chain crosses the membrane as a helical span at residues 1056–1076; it reads SPMFMILIVPLFFLYRYNQVY. The Cytoplasmic portion of the chain corresponds to 1077–1147; that stretch reads YTQTSRELKR…SSNRWQAIRV (71 aa). A helical membrane pass occupies residues 1148–1168; sequence EAIGALVVFSSAFFGVLSAVR. The Vacuolar segment spans residues 1169–1172; that stretch reads GNPN. A helical membrane pass occupies residues 1173 to 1193; sequence SGLVGLSLSYAVQITQSLTFV. Over 1194-1478 the chain is Cytoplasmic; it reads VRQSVDVETN…YSLAKESGLI (285 aa). The ABC transporter 2 domain occupies 1239 to 1473; it reads IKFDHYSVRY…KASLFYSLAK (235 aa). Residue 1273-1280 coordinates ATP; it reads GRTGAGKS.

It belongs to the ABC transporter superfamily. ABCC family. Conjugate transporter (TC 3.A.1.208) subfamily.

Its subcellular location is the vacuole membrane. Functionally, involved in vacuolar sequestration of glutathione S-conjugates. Together with abc4, required for accumulation of a red pigment (ade pigment) in the vacuole of a mutant affected in the adenine biosynthetic pathway. The chain is ATP-binding cassette transporter abc2 (abc2) from Schizosaccharomyces pombe (strain 972 / ATCC 24843) (Fission yeast).